Here is a 511-residue protein sequence, read N- to C-terminus: Bifunctional purine biosynthesis protein PurH (511 aa).

The MGS-like domain maps to 1–145; the sequence is MKQRALVSVS…KNHKFVSVIV (145 aa).

It belongs to the PurH family.

The catalysed reaction is (6R)-10-formyltetrahydrofolate + 5-amino-1-(5-phospho-beta-D-ribosyl)imidazole-4-carboxamide = 5-formamido-1-(5-phospho-D-ribosyl)imidazole-4-carboxamide + (6S)-5,6,7,8-tetrahydrofolate. The enzyme catalyses IMP + H2O = 5-formamido-1-(5-phospho-D-ribosyl)imidazole-4-carboxamide. It functions in the pathway purine metabolism; IMP biosynthesis via de novo pathway; 5-formamido-1-(5-phospho-D-ribosyl)imidazole-4-carboxamide from 5-amino-1-(5-phospho-D-ribosyl)imidazole-4-carboxamide (10-formyl THF route): step 1/1. The protein operates within purine metabolism; IMP biosynthesis via de novo pathway; IMP from 5-formamido-1-(5-phospho-D-ribosyl)imidazole-4-carboxamide: step 1/1. The polypeptide is Bifunctional purine biosynthesis protein PurH (Bacillus cereus (strain AH187)).